A 447-amino-acid polypeptide reads, in one-letter code: Chromosomal replication initiator protein DnaA (447 aa).

Positions 1-74 (MPDVESFWHS…TGFKLTGAEV (74 aa)) are domain I, interacts with DnaA modulators. The domain II stretch occupies residues 74-109 (VMPHFVVADEKDAALAQELEEPAEEEVVFSEQSKKA). Positions 110–326 (MLNPKYTFDT…GALVRVQAFA (217 aa)) are domain III, AAA+ region. ATP contacts are provided by Gly154, Gly156, Lys157, and Thr158. A domain IV, binds dsDNA region spans residues 327–447 (TINGEDITTS…VSEIKNLLNS (121 aa)).

The protein belongs to the DnaA family. Oligomerizes as a right-handed, spiral filament on DNA at oriC.

It localises to the cytoplasm. Functionally, plays an essential role in the initiation and regulation of chromosomal replication. ATP-DnaA binds to the origin of replication (oriC) to initiate formation of the DNA replication initiation complex once per cell cycle. Binds the DnaA box (a 9 base pair repeat at the origin) and separates the double-stranded (ds)DNA. Forms a right-handed helical filament on oriC DNA; dsDNA binds to the exterior of the filament while single-stranded (ss)DNA is stabiized in the filament's interior. The ATP-DnaA-oriC complex binds and stabilizes one strand of the AT-rich DNA unwinding element (DUE), permitting loading of DNA polymerase. After initiation quickly degrades to an ADP-DnaA complex that is not apt for DNA replication. Binds acidic phospholipids. Strand separation requires the DnaA boxes and adjacent DnaA-trio motifs as well as ATP. The sequence is that of Chromosomal replication initiator protein DnaA from Enterococcus faecalis (strain ATCC 700802 / V583).